The chain runs to 521 residues: Acidic amino acid decarboxylase GADL1 (521 aa).

Positions 1 to 12 are enriched in basic and acidic residues; sequence MSLLPDRERAPD. Positions 1–20 are disordered; it reads MSLLPDRERAPDGDISPQEM. K333 is subject to N6-(pyridoxal phosphate)lysine.

This sequence belongs to the group II decarboxylase family. Homodimer. Requires pyridoxal 5'-phosphate as cofactor. Expressed at highest levels in skeletal muscles. Also detected heart, spleen and rumen.

It carries out the reaction L-aspartate + H(+) = beta-alanine + CO2. It catalyses the reaction 3-sulfino-L-alanine + H(+) = hypotaurine + CO2. The catalysed reaction is L-cysteate + H(+) = taurine + CO2. Its function is as follows. Catalyzes the decarboxylation of L-aspartate, 3-sulfino-L-alanine (cysteine sulfinic acid), and L-cysteate to beta-alanine, hypotaurine and taurine, respectively. The preferred substrate is L-aspartate. Does not exhibit any decarboxylation activity toward glutamate. The polypeptide is Acidic amino acid decarboxylase GADL1 (GADL1) (Bos taurus (Bovine)).